A 287-amino-acid polypeptide reads, in one-letter code: Iron-sulfur cluster carrier protein (287 aa).

Residue 47–54 (GKGGVGKS) participates in ATP binding.

The protein belongs to the Mrp/NBP35 ATP-binding proteins family. As to quaternary structure, homodimer.

Its function is as follows. Binds and transfers iron-sulfur (Fe-S) clusters to target apoproteins. Can hydrolyze ATP. This Pseudomonas fragi protein is Iron-sulfur cluster carrier protein.